The chain runs to 316 residues: tRNA-cytidine(32) 2-sulfurtransferase (316 aa).

Residues S45–S50 carry the PP-loop motif motif. Positions 120, 123, and 211 each coordinate [4Fe-4S] cluster.

This sequence belongs to the TtcA family. Homodimer. The cofactor is Mg(2+). Requires [4Fe-4S] cluster as cofactor.

It is found in the cytoplasm. The catalysed reaction is cytidine(32) in tRNA + S-sulfanyl-L-cysteinyl-[cysteine desulfurase] + AH2 + ATP = 2-thiocytidine(32) in tRNA + L-cysteinyl-[cysteine desulfurase] + A + AMP + diphosphate + H(+). It participates in tRNA modification. Catalyzes the ATP-dependent 2-thiolation of cytidine in position 32 of tRNA, to form 2-thiocytidine (s(2)C32). The sulfur atoms are provided by the cysteine/cysteine desulfurase (IscS) system. This Shewanella sediminis (strain HAW-EB3) protein is tRNA-cytidine(32) 2-sulfurtransferase.